A 65-amino-acid chain; its full sequence is Large ribosomal subunit protein bL35 (65 aa).

The protein belongs to the bacterial ribosomal protein bL35 family.

This Pectobacterium atrosepticum (strain SCRI 1043 / ATCC BAA-672) (Erwinia carotovora subsp. atroseptica) protein is Large ribosomal subunit protein bL35.